A 410-amino-acid polypeptide reads, in one-letter code: Serine/threonine transporter SstT (410 aa).

The next 10 membrane-spanning stretches (helical) occupy residues 15-35, 49-69, 82-102, 118-138, 142-162, 190-210, 217-237, 299-319, 331-351, and 358-378; these read GSLV…AWLS, FVNA…ISSI, PIVM…VVAS, IVPP…MVTN, AVMK…GFAF, FAPV…GFDA, LLGL…PLLV, MAGA…TLGI, LVAS…LLLI, and FGIP…IGVL.

It belongs to the dicarboxylate/amino acid:cation symporter (DAACS) (TC 2.A.23) family.

It is found in the cell inner membrane. It catalyses the reaction L-serine(in) + Na(+)(in) = L-serine(out) + Na(+)(out). The enzyme catalyses L-threonine(in) + Na(+)(in) = L-threonine(out) + Na(+)(out). Functionally, involved in the import of serine and threonine into the cell, with the concomitant import of sodium (symport system). The protein is Serine/threonine transporter SstT of Erwinia tasmaniensis (strain DSM 17950 / CFBP 7177 / CIP 109463 / NCPPB 4357 / Et1/99).